A 312-amino-acid polypeptide reads, in one-letter code: uncharacterized protein (312 aa).

Transmembrane regions (helical) follow at residues 4-24 and 286-306; these read AIYL…TYAE and YLLS…AIYL.

The protein localises to the cell membrane. This is an uncharacterized protein from Methanocaldococcus jannaschii (strain ATCC 43067 / DSM 2661 / JAL-1 / JCM 10045 / NBRC 100440) (Methanococcus jannaschii).